The chain runs to 200 residues: MEQILYNQSLKISTLSTFQGLKFLKVLIFSIFQQLFYNPVIQLFGTKASIMESDSTTLLESSWSTERNFLNMNSDSISATKNVFILFFTIFRLAEYIVYKLSDQKYRLHTSLNVQHFRWNSKKNTNRKRTLSFSKAYLPRTNILPIFVADGLKNRFSGPLPGKSLESFQKLNLLSDNNIKRYAVPGNKAVNTLLWQEQYS.

This is an uncharacterized protein from Saccharomyces cerevisiae (strain ATCC 204508 / S288c) (Baker's yeast).